Here is a 212-residue protein sequence, read N- to C-terminus: Adenylate kinase (212 aa).

Position 10–15 (10–15) interacts with ATP; that stretch reads GAGKGT. Residues 30-59 form an NMP region; sequence STGDMFRAAIANQTEMGVLAKSYIDKGELV. Residues Thr-31, Arg-36, 57–59, 86–89, and Gln-93 each bind AMP; these read ELV and GYPR. The segment at 127–159 is LID; the sequence is GRIIHRETGETFHKVFNPPADYKEEDYYQREDD. ATP contacts are provided by residues Arg-128 and 137-138; that span reads TF. Positions 156 and 167 each coordinate AMP. ATP is bound at residue Gln-195.

It belongs to the adenylate kinase family. As to quaternary structure, monomer.

It is found in the cytoplasm. It carries out the reaction AMP + ATP = 2 ADP. It participates in purine metabolism; AMP biosynthesis via salvage pathway; AMP from ADP: step 1/1. Its function is as follows. Catalyzes the reversible transfer of the terminal phosphate group between ATP and AMP. Plays an important role in cellular energy homeostasis and in adenine nucleotide metabolism. The polypeptide is Adenylate kinase (Streptococcus sanguinis (strain SK36)).